The chain runs to 356 residues: Tyrosine recombinase XerS (356 aa).

In terms of domain architecture, Core-binding (CB) spans 16-121; it reads IMPWYVLDYY…ALSSLYKYLT (106 aa). Positions 169 to 354 constitute a Tyr recombinase domain; it reads AFLDYVDKEY…VNDEQKNALD (186 aa). Catalysis depends on residues Arg210, Lys234, His306, Arg309, and His332. The active-site O-(3'-phospho-DNA)-tyrosine intermediate is the Tyr341.

Belongs to the 'phage' integrase family. XerS subfamily.

The protein localises to the cytoplasm. With respect to regulation, ftsK is required for recombination. Functionally, site-specific tyrosine recombinase, which acts by catalyzing the cutting and rejoining of the recombining DNA molecules. Essential to convert dimers of the bacterial chromosome into monomers to permit their segregation at cell division. In Streptococcus equi subsp. zooepidemicus (strain MGCS10565), this protein is Tyrosine recombinase XerS.